The primary structure comprises 338 residues: MKLPLTFCRLLSRLNRFSVKASPPVSFSTFSYLCSQKKKNSYEAVDQAKYSRLVRSVLSRGPAQTPESLFKEDDVLYGPVSKHKAAEPEPQARVPQHCFPIFNEERTGKPHTDASSSPLKIPLQRNSIPSVTRILQQTMPPEQSFFLERWKERMVLELGEDGFAEYTSNVFLQGKQFHKALESILSPQENLTGGEEHPQCGYIESIQHILTEISGVQALESAVQHEALKYVGLLDCVAEYRGKLCVIDWKTSEKPKPLIRNTYDNPLQVVAYMGAVNHDAHYSFQVQCGLIVVAYKDGSPAHPHFMDEELCSKYWAKWLLRLEEYTEKQKNLSAPEPA.

A mitochondrion-targeting transit peptide spans Met1–Gln64. Residues Asp235, Asp248, and Lys250 contribute to the active site.

The protein belongs to the MGME1 family.

It is found in the mitochondrion. In terms of biological role, metal-dependent single-stranded DNA (ssDNA) exonuclease involved in mitochondrial genome maintenance. Has preference for 5'-3' exonuclease activity but is also capable of endonuclease activity on linear substrates. Necessary for maintenance of proper 7S DNA levels. Probably involved in mitochondrial DNA (mtDNA) repair, possibly via the processing of displaced DNA containing Okazaki fragments during RNA-primed DNA synthesis on the lagging strand or via processing of DNA flaps during long-patch base excision repair. Specifically binds 5-hydroxymethylcytosine (5hmC)-containing DNA in stem cells. This is Mitochondrial genome maintenance exonuclease 1 (Mgme1) from Mus musculus (Mouse).